The sequence spans 282 residues: D-alanine aminotransferase (282 aa).

Residue tyrosine 32 participates in substrate binding. Residue arginine 51 coordinates pyridoxal 5'-phosphate. Substrate is bound by residues arginine 99 and histidine 101. Lysine 146 serves as the catalytic Proton acceptor. Lysine 146 carries the N6-(pyridoxal phosphate)lysine modification. Residue glutamate 178 participates in pyridoxal 5'-phosphate binding.

The protein belongs to the class-IV pyridoxal-phosphate-dependent aminotransferase family. Homodimer. The cofactor is pyridoxal 5'-phosphate.

The enzyme catalyses D-alanine + 2-oxoglutarate = D-glutamate + pyruvate. In terms of biological role, acts on the D-isomers of alanine, leucine, aspartate, glutamate, aminobutyrate, norvaline and asparagine. The enzyme transfers an amino group from a substrate D-amino acid to the pyridoxal phosphate cofactor to form pyridoxamine and an alpha-keto acid in the first half-reaction. The second half-reaction is the reverse of the first, transferring the amino group from the pyridoxamine to a second alpha-keto acid to form the product D-amino acid via a ping-pong mechanism. This is an important process in the formation of D-alanine and D-glutamate, which are essential bacterial cell wall components. The chain is D-alanine aminotransferase (dat) from Staphylococcus aureus (strain MW2).